The primary structure comprises 156 residues: Cyclic pyranopterin monophosphate synthase (156 aa).

Substrate contacts are provided by residues 75–77 and 111–112; these read LCH and ME. The active site involves Asp126.

The protein belongs to the MoaC family. In terms of assembly, homohexamer; trimer of dimers.

It carries out the reaction (8S)-3',8-cyclo-7,8-dihydroguanosine 5'-triphosphate = cyclic pyranopterin phosphate + diphosphate. It participates in cofactor biosynthesis; molybdopterin biosynthesis. Its function is as follows. Catalyzes the conversion of (8S)-3',8-cyclo-7,8-dihydroguanosine 5'-triphosphate to cyclic pyranopterin monophosphate (cPMP). The protein is Cyclic pyranopterin monophosphate synthase of Erythrobacter litoralis (strain HTCC2594).